A 1198-amino-acid chain; its full sequence is Structural polyprotein (1198 aa).

An interaction with host EXOC1 region spans residues 2–15; that stretch reads TKKPGGPGKNRAIN. The hydrophobic; homodimerization of capsid protein C stretch occupies residues 37-72; that stretch reads LLDGRGPVRFVLALITFFKFTALAPTKALLGRWKAV. Residues 106-127 constitute a propeptide, ER anchor for the capsid protein C, removed in mature form by serine protease NS3; it reads GGNEGSIMWLASLAVVIACAGA. The helical transmembrane segment at 110-130 threads the bilayer; it reads GSIMWLASLAVVIACAGAMKL. Asn142 is a glycosylation site (N-linked (GlcNAc...) asparagine; by host). Helical transmembrane passes span 254 to 274 and 280 to 294; these read WIIR…MLGS and VVFT…PAYS. 6 disulfides stabilise this stretch: Cys297/Cys324, Cys354/Cys410, Cys354/Cys415, Cys368/Cys399, Cys386/Cys410, and Cys386/Cys415. A fusion peptide region spans residues 392-405; sequence DRGWGNGCGLFGKG. An N-linked (GlcNAc...) asparagine; by host glycan is attached at Asn448. 2 disulfide bridges follow: Cys484-Cys581 and Cys598-Cys629. The next 2 membrane-spanning stretches (helical) occupy residues 747-767 and 774-794; these read FGGM…WMGV and IALA…NVHA. Intrachain disulfides connect Cys798-Cys809, Cys849-Cys937, Cys973-Cys1017, Cys1074-Cys1123, Cys1085-Cys1106, and Cys1107-Cys1110. Asn924 and Asn1001 each carry an N-linked (GlcNAc...) asparagine; by host glycan. The segment at 1151–1177 is disordered; the sequence is MVDPFSAGPSGDVSGHPGSPSQEVDGQ.

Homodimer. Interacts (via N-terminus) with host EXOC1 (via C-terminus); this interaction results in EXOC1 degradation through the proteasome degradation pathway. Interacts with host CAPRIN1; this interaction is involved in the suppression of the integrated stress response. As to quaternary structure, forms heterodimers with envelope protein E in the endoplasmic reticulum and Golgi. In terms of assembly, homodimer; in the endoplasmic reticulum and Golgi. Interacts with protein prM. Interacts with non-structural protein 1. In terms of processing, genome polyprotein: Specific enzymatic cleavages in vivo yield mature proteins. Cleavages in the lumen of endoplasmic reticulum are performed by host signal peptidase, whereas cleavages in the cytoplasmic side are performed by serine protease NS3. Signal cleavage at the 2K-4B site requires a prior NS3 protease-mediated cleavage at the 4A-2K site. Cleaved in post-Golgi vesicles by a host furin, releasing the mature small envelope protein M, and peptide pr. This cleavage is incomplete as up to 30% of viral particles still carry uncleaved prM. Post-translationally, N-glycosylated.

It is found in the secreted. It localises to the virion membrane. The protein resides in the host endoplasmic reticulum membrane. Plays a role in virus budding by binding to the cell membrane and gathering the viral RNA into a nucleocapsid that forms the core of a mature virus particle. During virus entry, may induce genome penetration into the host cytoplasm after hemifusion induced by the surface proteins. Can migrate to the cell nucleus where it modulates host functions. Overcomes the anti-viral effects of host EXOC1 by sequestering and degrading the latter through the proteasome degradation pathway. Inhibits the integrated stress response (ISR) in the infected cell by binding to host CAPRIN1. In terms of biological role, inhibits RNA silencing by interfering with host Dicer. Its function is as follows. Prevents premature fusion activity of envelope proteins in trans-Golgi by binding to envelope protein E at pH6.0. After virion release in extracellular space, gets dissociated from E dimers. Functionally, acts as a chaperone for envelope protein E during intracellular virion assembly by masking and inactivating envelope protein E fusion peptide. prM is the only viral peptide matured by host furin in the trans-Golgi network probably to avoid catastrophic activation of the viral fusion activity in acidic Golgi compartment prior to virion release. prM-E cleavage is inefficient, and many virions are only partially matured. These uncleaved prM would play a role in immune evasion. May play a role in virus budding. Exerts cytotoxic effects by activating a mitochondrial apoptotic pathway through M ectodomain. May display a viroporin activity. In terms of biological role, binds to host cell surface receptor and mediates fusion between viral and cellular membranes. Envelope protein is synthesized in the endoplasmic reticulum in the form of heterodimer with protein prM. They play a role in virion budding in the ER, and the newly formed immature particle is covered with 60 spikes composed of heterodimer between precursor prM and envelope protein E. The virion is transported to the Golgi apparatus where the low pH causes dissociation of PrM-E heterodimers and formation of E homodimers. prM-E cleavage is inefficient, and many virions are only partially matured. These uncleaved prM would play a role in immune evasion. Its function is as follows. May play a role in neuroinvasiveness. This is Structural polyprotein from Ardeidae (herons).